We begin with the raw amino-acid sequence, 429 residues long: Phosphoribosylamine--glycine ligase (429 aa).

Residues 108–315 (KDFLARHRIP…LVLLVEAALA (208 aa)) enclose the ATP-grasp domain. 134 to 195 (LHEQGAPIVI…EEFLDGEEAS (62 aa)) is an ATP binding site. Positions 285 and 287 each coordinate Mg(2+).

Belongs to the GARS family. The cofactor is Mg(2+). Mn(2+) serves as cofactor.

The catalysed reaction is 5-phospho-beta-D-ribosylamine + glycine + ATP = N(1)-(5-phospho-beta-D-ribosyl)glycinamide + ADP + phosphate + H(+). It participates in purine metabolism; IMP biosynthesis via de novo pathway; N(1)-(5-phospho-D-ribosyl)glycinamide from 5-phospho-alpha-D-ribose 1-diphosphate: step 2/2. The protein is Phosphoribosylamine--glycine ligase of Pseudomonas aeruginosa (strain ATCC 15692 / DSM 22644 / CIP 104116 / JCM 14847 / LMG 12228 / 1C / PRS 101 / PAO1).